Here is a 159-residue protein sequence, read N- to C-terminus: Cyanate hydratase (159 aa).

Catalysis depends on residues Arg-103, Glu-106, and Ser-129.

This sequence belongs to the cyanase family.

The enzyme catalyses cyanate + hydrogencarbonate + 3 H(+) = NH4(+) + 2 CO2. Catalyzes the reaction of cyanate with bicarbonate to produce ammonia and carbon dioxide. This is Cyanate hydratase from Blastomyces gilchristii (strain SLH14081) (Blastomyces dermatitidis).